A 261-amino-acid chain; its full sequence is Cytochrome c oxidase subunit 3 (261 aa).

The Mitochondrial matrix segment spans residues 1-15 (MTHQTHAYHMVNPSP). The helical transmembrane segment at 16–34 (WPLTGALSALLMTSGLIMW) threads the bilayer. The Mitochondrial intermembrane portion of the chain corresponds to 35–40 (FHFNST). Residues 41 to 66 (TLLMLGLTTNMLTMYQWWRDIIREST) traverse the membrane as a helical segment. Topologically, residues 67–72 (FQGHHT) are mitochondrial matrix. A helical transmembrane segment spans residues 73–105 (PNVQKGLRYGMILFIISEVLFFTGFFWAFYHSS). Residues 106–128 (LAPTPELGGCWPPTGIHPLNPLE) lie on the Mitochondrial intermembrane side of the membrane. Residues 129-152 (VPLLNTSVLLASGVSITWAHHSLM) traverse the membrane as a helical segment. The Mitochondrial matrix segment spans residues 153–155 (EGN). The chain crosses the membrane as a helical span at residues 156–183 (RNHMLQALFITIALGVYFTLLQASEYYE). The Mitochondrial intermembrane portion of the chain corresponds to 184 to 190 (APFTISD). The chain crosses the membrane as a helical span at residues 191 to 223 (GVYGSTFFVATGFHGLHVIIGSTFLIVCFFRQL). Residues 224 to 232 (KFHFTSSHH) lie on the Mitochondrial matrix side of the membrane. Residues 233-256 (FGFEAAAWYWHFVDVVWLFLYVSI) form a helical membrane-spanning segment. Residues 257-261 (YWWGS) lie on the Mitochondrial intermembrane side of the membrane.

It belongs to the cytochrome c oxidase subunit 3 family. Component of the cytochrome c oxidase (complex IV, CIV), a multisubunit enzyme composed of 14 subunits. The complex is composed of a catalytic core of 3 subunits MT-CO1, MT-CO2 and MT-CO3, encoded in the mitochondrial DNA, and 11 supernumerary subunits COX4I, COX5A, COX5B, COX6A, COX6B, COX6C, COX7A, COX7B, COX7C, COX8 and NDUFA4, which are encoded in the nuclear genome. The complex exists as a monomer or a dimer and forms supercomplexes (SCs) in the inner mitochondrial membrane with NADH-ubiquinone oxidoreductase (complex I, CI) and ubiquinol-cytochrome c oxidoreductase (cytochrome b-c1 complex, complex III, CIII), resulting in different assemblies (supercomplex SCI(1)III(2)IV(1) and megacomplex MCI(2)III(2)IV(2)).

The protein localises to the mitochondrion inner membrane. The enzyme catalyses 4 Fe(II)-[cytochrome c] + O2 + 8 H(+)(in) = 4 Fe(III)-[cytochrome c] + 2 H2O + 4 H(+)(out). Functionally, component of the cytochrome c oxidase, the last enzyme in the mitochondrial electron transport chain which drives oxidative phosphorylation. The respiratory chain contains 3 multisubunit complexes succinate dehydrogenase (complex II, CII), ubiquinol-cytochrome c oxidoreductase (cytochrome b-c1 complex, complex III, CIII) and cytochrome c oxidase (complex IV, CIV), that cooperate to transfer electrons derived from NADH and succinate to molecular oxygen, creating an electrochemical gradient over the inner membrane that drives transmembrane transport and the ATP synthase. Cytochrome c oxidase is the component of the respiratory chain that catalyzes the reduction of oxygen to water. Electrons originating from reduced cytochrome c in the intermembrane space (IMS) are transferred via the dinuclear copper A center (CU(A)) of subunit 2 and heme A of subunit 1 to the active site in subunit 1, a binuclear center (BNC) formed by heme A3 and copper B (CU(B)). The BNC reduces molecular oxygen to 2 water molecules using 4 electrons from cytochrome c in the IMS and 4 protons from the mitochondrial matrix. This chain is Cytochrome c oxidase subunit 3 (MT-CO3), found in Litocranius walleri (Gerenuk).